The chain runs to 281 residues: 2-dehydro-3-deoxyphosphooctonate aldolase (281 aa).

The protein belongs to the KdsA family.

Its subcellular location is the cytoplasm. The enzyme catalyses D-arabinose 5-phosphate + phosphoenolpyruvate + H2O = 3-deoxy-alpha-D-manno-2-octulosonate-8-phosphate + phosphate. The protein operates within carbohydrate biosynthesis; 3-deoxy-D-manno-octulosonate biosynthesis; 3-deoxy-D-manno-octulosonate from D-ribulose 5-phosphate: step 2/3. It participates in bacterial outer membrane biogenesis; lipopolysaccharide biosynthesis. This chain is 2-dehydro-3-deoxyphosphooctonate aldolase, found in Pseudomonas paraeruginosa (strain DSM 24068 / PA7) (Pseudomonas aeruginosa (strain PA7)).